A 61-amino-acid chain; its full sequence is Large ribosomal subunit protein bL32 (61 aa).

This sequence belongs to the bacterial ribosomal protein bL32 family.

This Ehrlichia chaffeensis (strain ATCC CRL-10679 / Arkansas) protein is Large ribosomal subunit protein bL32.